The primary structure comprises 235 residues: Putative cobalt transport protein CbiM 2 (235 aa).

7 helical membrane passes run 8 to 28 (LPAI…AYGV), 40 to 60 (GILP…SLKM), 74 to 94 (GIGA…IVLI), 107 to 127 (TLGA…YLIY), 135 to 155 (LNFY…TYIV), 160 to 180 (LALA…SSFS), and 185 to 205 (IFAI…ALLF).

The protein belongs to the CbiM family. In terms of assembly, forms an energy-coupling factor (ECF) transporter complex composed of an ATP-binding protein (A component, CbiO), a transmembrane protein (T component, CbiQ) and 2 possible substrate-capture proteins (S components, CbiM and CbiN) of unknown stoichimetry.

It localises to the cell membrane. The protein operates within cofactor biosynthesis; adenosylcobalamin biosynthesis. Part of the energy-coupling factor (ECF) transporter complex CbiMNOQ involved in cobalt import. The sequence is that of Putative cobalt transport protein CbiM 2 from Methanosarcina barkeri (strain Fusaro / DSM 804).